We begin with the raw amino-acid sequence, 268 residues long: MEPLVIAGKSYSSRLLLGTGKYRDFAETRAAVDASGAQIITVAIRRTNIGQNPDEPNLLDILPPSQFTLLPNTAGCYTAEDAVRTLRLARELLDGHALVKLEVLGDQKTLFPDVVATIEAAKILVKEGFQVMVYTSDDPIVARQLEDIGCAAIMPLASLIGSGMGILNPWNLQIIIDKATVPVIVDAGVGTASDAAIAMELGCDGVLMNTAVASARNPILMASAMRKAVEAGREAYLAGRMPRKIYQASPSSPAEGMFTGTQHPAANS.

Lys-100 functions as the Schiff-base intermediate with DXP in the catalytic mechanism. Residues Gly-161, 187-188 (AG), and 209-210 (NT) each bind 1-deoxy-D-xylulose 5-phosphate. Residues 248-268 (ASPSSPAEGMFTGTQHPAANS) are disordered. Over residues 259 to 268 (TGTQHPAANS) the composition is skewed to polar residues.

The protein belongs to the ThiG family. In terms of assembly, homotetramer. Forms heterodimers with either ThiH or ThiS.

It is found in the cytoplasm. The catalysed reaction is [ThiS sulfur-carrier protein]-C-terminal-Gly-aminoethanethioate + 2-iminoacetate + 1-deoxy-D-xylulose 5-phosphate = [ThiS sulfur-carrier protein]-C-terminal Gly-Gly + 2-[(2R,5Z)-2-carboxy-4-methylthiazol-5(2H)-ylidene]ethyl phosphate + 2 H2O + H(+). Its pathway is cofactor biosynthesis; thiamine diphosphate biosynthesis. Catalyzes the rearrangement of 1-deoxy-D-xylulose 5-phosphate (DXP) to produce the thiazole phosphate moiety of thiamine. Sulfur is provided by the thiocarboxylate moiety of the carrier protein ThiS. In vitro, sulfur can be provided by H(2)S. The chain is Thiazole synthase from Nitrosomonas europaea (strain ATCC 19718 / CIP 103999 / KCTC 2705 / NBRC 14298).